Here is a 392-residue protein sequence, read N- to C-terminus: Succinate--CoA ligase [ADP-forming] subunit beta (392 aa).

Residues 9–236 (RDLFERHGLP…QAAVDPLEQA (228 aa)) form the ATP-grasp domain. Residues Lys45, 52-54 (GRG), Ala94, and Glu99 each bind ATP. 2 residues coordinate Mg(2+): Asn191 and Asp205. Substrate is bound by residues Asn256 and 318-320 (GIT).

The protein belongs to the succinate/malate CoA ligase beta subunit family. As to quaternary structure, heterotetramer of two alpha and two beta subunits. Requires Mg(2+) as cofactor.

It carries out the reaction succinate + ATP + CoA = succinyl-CoA + ADP + phosphate. The catalysed reaction is GTP + succinate + CoA = succinyl-CoA + GDP + phosphate. It participates in carbohydrate metabolism; tricarboxylic acid cycle; succinate from succinyl-CoA (ligase route): step 1/1. Functionally, succinyl-CoA synthetase functions in the citric acid cycle (TCA), coupling the hydrolysis of succinyl-CoA to the synthesis of either ATP or GTP and thus represents the only step of substrate-level phosphorylation in the TCA. The beta subunit provides nucleotide specificity of the enzyme and binds the substrate succinate, while the binding sites for coenzyme A and phosphate are found in the alpha subunit. In Salinispora tropica (strain ATCC BAA-916 / DSM 44818 / JCM 13857 / NBRC 105044 / CNB-440), this protein is Succinate--CoA ligase [ADP-forming] subunit beta.